The following is a 138-amino-acid chain: Small ribosomal subunit protein uS11 (138 aa).

Low complexity predominate over residues 1-12 (MPPAKKAAAAPK). The interval 1 to 27 (MPPAKKAAAAPKKGQKTRRREKKNVPH) is disordered. Residues 13–22 (KGQKTRRREK) are compositionally biased toward basic residues.

Belongs to the universal ribosomal protein uS11 family. As to quaternary structure, part of the 30S ribosomal subunit. Interacts with proteins S7 and S18. Binds to IF-3.

Functionally, located on the platform of the 30S subunit, it bridges several disparate RNA helices of the 16S rRNA. Forms part of the Shine-Dalgarno cleft in the 70S ribosome. The protein is Small ribosomal subunit protein uS11 of Mycolicibacterium paratuberculosis (strain ATCC BAA-968 / K-10) (Mycobacterium paratuberculosis).